The following is a 457-amino-acid chain: Cell division protein FtsZ (457 aa).

Residues G26–N30, G115–G117, E146, K150, and D193 contribute to the GTP site. Over residues K429 to R447 the composition is skewed to basic and acidic residues. The segment at K429–N457 is disordered. The segment covering S448–N457 has biased composition (polar residues).

The protein belongs to the FtsZ family. Homodimer. Polymerizes to form a dynamic ring structure in a strictly GTP-dependent manner. Interacts directly with several other division proteins.

It localises to the cytoplasm. In terms of biological role, essential cell division protein that forms a contractile ring structure (Z ring) at the future cell division site. The regulation of the ring assembly controls the timing and the location of cell division. One of the functions of the FtsZ ring is to recruit other cell division proteins to the septum to produce a new cell wall between the dividing cells. Binds GTP and shows GTPase activity. The protein is Cell division protein FtsZ of Porphyromonas gingivalis (strain ATCC BAA-308 / W83).